The primary structure comprises 512 residues: FACT complex subunit pob3 (512 aa).

Over residues 460-504 the composition is skewed to acidic residues; sequence LDDEDEEGDEEMEEALSEDEDFQAESESDVAEEYDENAESSDEEG. The segment at 460 to 512 is disordered; it reads LDDEDEEGDEEMEEALSEDEDFQAESESDVAEEYDENAESSDEEGASGAEGSE.

The protein belongs to the SSRP1 family. As to quaternary structure, forms a stable heterodimer with spt16. The spt16-pob3 dimer weakly associates with multiple molecules of nhp6 to form the FACT complex. Interacts with abo1.

It is found in the nucleus. It localises to the chromosome. Component of the FACT complex, a general chromatin factor that acts to reorganize nucleosomes. The FACT complex is involved in multiple processes that require DNA as a template such as mRNA elongation, DNA replication and DNA repair. During transcription elongation the FACT complex acts as a histone chaperone that both destabilizes and restores nucleosomal structure. It facilitates the passage of RNA polymerase II and transcription by promoting the dissociation of one histone H2A-H2B dimer from the nucleosome, then subsequently promotes the reestablishment of the nucleosome following the passage of RNA polymerase II. The chain is FACT complex subunit pob3 from Schizosaccharomyces pombe (strain 972 / ATCC 24843) (Fission yeast).